We begin with the raw amino-acid sequence, 452 residues long: Flavin-containing monooxygenase FMO GS-OX-like 4 (452 aa).

17–22 (GAGAAG) contributes to the FAD binding site. Position 217-222 (217-222 (GNSASA)) interacts with NADP(+).

This sequence belongs to the FMO family. Requires FAD as cofactor.

In terms of biological role, catalyzes the conversion of methylthioalkyl glucosinolates of any chain length into methylsulfinylalkyl glucosinolates. This Arabidopsis thaliana (Mouse-ear cress) protein is Flavin-containing monooxygenase FMO GS-OX-like 4.